Reading from the N-terminus, the 383-residue chain is MKRNILAVLIPALLAAGAANAAEIYNKDGNKLDLYGKVKAMRYLSDADSNASNNADKSYTRIGFKGQTLINDQLTGYGQWEYNFSLSNSESSSDAQSGNKTRLGFAGLKLKDYGSVDYGRNYGVIYDVEAFTDMMPEFGATGYTRTDTYMLTRGNSMLTWRNSDFFGLVDGLKIALQYQGKNEGSGTRATNVSNGDGYGASLSYKIVEGLTINGAMSSSNRLNANSASSTTSQKMAAYGSGGRAEAWATGLKYDANGVYLAGTYAETRNTNPFSGASYTFAGNSTATAVSGYANKVQNTELVAQYQFDSGLRPSLAYVQTKAKDIENGIGDADLSKFVDVAATYYFNKNMSAFVDYKVNLLSDSNKLHLNTDDIVAVGLVYQF.

The first 21 residues, 1 to 21 (MKRNILAVLIPALLAAGAANA), serve as a signal peptide directing secretion. Over 22–30 (AEIYNKDGN) the chain is Periplasmic. The beta stranded transmembrane segment at 31–45 (KLDLYGKVKAMRYLS) threads the bilayer. Residues 46–58 (DADSNASNNADKS) lie on the Extracellular side of the membrane. The chain crosses the membrane as a beta stranded span at residues 59–70 (YTRIGFKGQTLI). At 71–74 (NDQL) the chain is on the periplasmic side. A beta stranded membrane pass occupies residues 75–86 (TGYGQWEYNFSL). Residues 87–100 (SNSESSSDAQSGNK) are Extracellular-facing. A beta stranded membrane pass occupies residues 101–109 (TRLGFAGLK). Residues 110–112 (LKD) are Periplasmic-facing. The beta stranded transmembrane segment at 113–122 (YGSVDYGRNY) threads the bilayer. Residues 123 to 155 (GVIYDVEAFTDMMPEFGATGYTRTDTYMLTRGN) lie on the Extracellular side of the membrane. The chain crosses the membrane as a beta stranded span at residues 156 to 164 (SMLTWRNSD). Residues 165 to 171 (FFGLVDG) lie on the Periplasmic side of the membrane. The chain crosses the membrane as a beta stranded span at residues 172-178 (LKIALQY). Residues 179 to 198 (QGKNEGSGTRATNVSNGDGY) are Extracellular-facing. A beta stranded membrane pass occupies residues 199 to 206 (GASLSYKI). Over 207–209 (VEG) the chain is Periplasmic. A beta stranded membrane pass occupies residues 210 to 219 (LTINGAMSSS). At 220-243 (NRLNANSASSTTSQKMAAYGSGGR) the chain is on the extracellular side. The beta stranded transmembrane segment at 244 to 252 (AEAWATGLK) threads the bilayer. At 253–258 (YDANGV) the chain is on the periplasmic side. The chain crosses the membrane as a beta stranded span at residues 259–268 (YLAGTYAETR). Over 269–296 (NTNPFSGASYTFAGNSTATAVSGYANKV) the chain is Extracellular. A beta stranded transmembrane segment spans residues 297 to 307 (QNTELVAQYQF). Residues 308–310 (DSG) are Periplasmic-facing. Residues 311 to 319 (LRPSLAYVQ) form a beta stranded membrane-spanning segment. Residues 320 to 335 (TKAKDIENGIGDADLS) are Extracellular-facing. The beta stranded transmembrane segment at 336 to 346 (KFVDVAATYYF) threads the bilayer. At 347–351 (NKNMS) the chain is on the periplasmic side. The beta stranded transmembrane segment at 352-361 (AFVDYKVNLL) threads the bilayer. Residues 362–372 (SDSNKLHLNTD) are Extracellular-facing. Residues 373 to 383 (DIVAVGLVYQF) traverse the membrane as a beta stranded segment.

It belongs to the Gram-negative porin family. Homotrimer.

The protein resides in the cell outer membrane. In terms of biological role, may play an important role in maintaining pathogenicity in plants. The sequence is that of Outer membrane protein Omp-EA (omp-EA) from Erwinia amylovora (Fire blight bacteria).